The primary structure comprises 185 residues: Ribosome-recycling factor (185 aa).

The protein belongs to the RRF family.

The protein localises to the cytoplasm. In terms of biological role, responsible for the release of ribosomes from messenger RNA at the termination of protein biosynthesis. May increase the efficiency of translation by recycling ribosomes from one round of translation to another. This Campylobacter fetus subsp. fetus (strain 82-40) protein is Ribosome-recycling factor.